A 216-amino-acid polypeptide reads, in one-letter code: Holliday junction branch migration complex subunit RuvA (216 aa).

Residues 1 to 64 form a domain I region; the sequence is MISFIKGVLI…EDAQQLYGFK (64 aa). Residues 65–143 form a domain II region; it reads SKVDKKVFQE…KMANEIYAQT (79 aa). The flexible linker stretch occupies residues 144–163; sequence SGTTTTSQDSQAQQAPTSVV. Residues 164–216 form a domain III region; that stretch reads LANSIFNESVDALLALGYKQKDAEKMARSAMGDATTAAEVIRKALQGSIKSKR.

It belongs to the RuvA family. In terms of assembly, homotetramer. Forms an RuvA(8)-RuvB(12)-Holliday junction (HJ) complex. HJ DNA is sandwiched between 2 RuvA tetramers; dsDNA enters through RuvA and exits via RuvB. An RuvB hexamer assembles on each DNA strand where it exits the tetramer. Each RuvB hexamer is contacted by two RuvA subunits (via domain III) on 2 adjacent RuvB subunits; this complex drives branch migration. In the full resolvosome a probable DNA-RuvA(4)-RuvB(12)-RuvC(2) complex forms which resolves the HJ.

The protein resides in the cytoplasm. Functionally, the RuvA-RuvB-RuvC complex processes Holliday junction (HJ) DNA during genetic recombination and DNA repair, while the RuvA-RuvB complex plays an important role in the rescue of blocked DNA replication forks via replication fork reversal (RFR). RuvA specifically binds to HJ cruciform DNA, conferring on it an open structure. The RuvB hexamer acts as an ATP-dependent pump, pulling dsDNA into and through the RuvAB complex. HJ branch migration allows RuvC to scan DNA until it finds its consensus sequence, where it cleaves and resolves the cruciform DNA. The protein is Holliday junction branch migration complex subunit RuvA of Francisella tularensis subsp. tularensis (strain WY96-3418).